The chain runs to 99 residues: Putative septation protein SpoVG (99 aa).

This sequence belongs to the SpoVG family.

Its function is as follows. Could be involved in septation. This chain is Putative septation protein SpoVG, found in Onion yellows phytoplasma (strain OY-M).